The chain runs to 180 residues: Prothoracicotropic hormone (180 aa).

Residues 1–15 form the signal peptide; the sequence is MKLLILCVMVHGLLA. Positions 16–64 are excised as a propeptide; the sequence is EGPGQVLWKEQVVAPEFLLDDREDIASNRNAFFYEDKRSFRPEGLGEQV. Disulfide bonds link Cys-88–Cys-123 and Cys-111–Cys-175.

Homodimer; disulfide-linked.

The protein localises to the secreted. PTTH is a brain secretory polypeptide of insects which stimulates the prothoracic glands to produce and release ecdysone, the steroid essential to insect development. This Camponotus floridanus (Florida carpenter ant) protein is Prothoracicotropic hormone.